The primary structure comprises 579 residues: MFS-type transporter olcL (579 aa).

A compositionally biased stretch (polar residues) spans methionine 1–threonine 24. Residues methionine 1–aspartate 75 form a disordered region. Positions valine 25–threonine 35 are enriched in basic and acidic residues. Positions serine 36–glutamine 54 are enriched in polar residues. The N-linked (GlcNAc...) asparagine glycan is linked to asparagine 45. Helical transmembrane passes span leucine 85–isoleucine 105, glycine 121–phenylalanine 141, alanine 159–isoleucine 179, isoleucine 183–valine 203, leucine 214–threonine 234, tryptophan 241–phenylalanine 261, leucine 282–glycine 302, serine 310–valine 330, and leucine 355–phenylalanine 375. The N-linked (GlcNAc...) asparagine glycan is linked to asparagine 380. Helical transmembrane passes span leucine 388–valine 408, isoleucine 411–leucine 431, phenylalanine 439–leucine 459, isoleucine 479–phenylalanine 501, and phenylalanine 553–isoleucine 573.

This sequence belongs to the major facilitator superfamily. TCR/Tet family.

It is found in the peroxisome membrane. In terms of biological role, MFS-type transporter; part of the gene cluster that mediates the biosynthesis of 15-deoxyoxalicine B. The first step of the pathway is the synthesis of nicotinyl-CoA from nicotinic acid by the nicotinic acid-CoA ligase olcI. Nicotinyl-CoA is then a substrate of polyketide synthase olcA to produce 4-hydroxy-6-(3-pyridinyl)-2H-pyran-2-one (HPPO) which is further prenylated by the polyprenyl transferase olcH to yield geranylgeranyl-HPPO. Geranylgeranyl pyrophosphate is provided by the cluster-specific geranylgeranyl pyrophosphate synthase olcC. The FAD-dependent monooxygenase olcE catalyzes the epoxidation of geranylgeranyl-HPPO and the terpene cyclase olcD catalyzes the cyclization of the terpenoid component, resulting in the formation of the tricyclic terpene moiety seen in predecaturin E. The cytochrome P450 monooxygenase then catalyzes the allylic oxidation of predecaturin E, which is followed by spirocylization with concomitant loss of one molecule of water to form decaturin E. Decaturin E is the substrate of the cytochrome P450 monooxygenase olcJ which hydroxylates it at the C-29 position to form decaturin F. The short-chain dehydrogenase/reductase olcF may catalyze the oxidation of decaturin F to generate the 29-hydroxyl-27-one intermediate, and subsequent hemiacetal formation probably leads to the formation of decaturin C. The dioxygenase olcK may be a peroxisomal enzyme that catalyzes the hydroxylation of decaturin C into decaturin A once decaturin C is shuttled into the peroxisome by the MFS transporter olcL. Finally the cytochrome P450 monooxygenase olcB catalyzes the oxidative rearrangement to yield 15-deoxyoxalicine B. In the absence of olcJ, decaturin E may be shunted to a pathway in which it is oxidized to a ketone, possibly by olcF, to form decaturin D, which undergoes further allylic oxidation to yield decaturin G. Moreover, in the absence of oclK or oclL, oclB can convert decaturin C into 15-deoxyoxalicine A. The protein is MFS-type transporter olcL of Penicillium canescens.